A 453-amino-acid polypeptide reads, in one-letter code: MASKVISATIRRTLTKPHGTFSRCRYLSTAAAATEVNYEDESIMMKGVRISGRPLYLDMQATTPIDPRVFDAMNASQIHEYGNPHSRTHLYGWEAENAVENARNQVAKLIEASPKEIVFVSGATEANNMAVKGVMHFYKDTKKHVITTQTEHKCVLDSCRHLQQEGFEVTYLPVKTDGLVDLEMLREAIRPDTGLVSIMAVNNEIGVVQPMEEIGMICKEHNVPFHTDAAQAIGKIPVDVKKWNVALMSMSAHKIYGPKGVGALYVRRRPRIRLEPLMNGGGQERGLRSGTGATQQIVGFGAACELAMKEMEYDEKWIKGLQERLLNGVREKLDGVVVNGSMDSRYVGNLNLSFAYVEGESLLMGLKEVAVSSGSACTSASLEPSYVLRALGVDEDMAHTSIRFGIGRFTTKEEIDKAVELTVKQVEKLREMSPLYEMVKEGIDIKNIQWSQH.

The N-terminal 34 residues, 1–34 (MASKVISATIRRTLTKPHGTFSRCRYLSTAAAAT), are a transit peptide targeting the mitochondrion. Pyridoxal 5'-phosphate contacts are provided by residues 123 to 124 (AT), N203, Q231, and 251 to 253 (SAH). N6-(pyridoxal phosphate)lysine is present on K254. T291 provides a ligand contact to pyridoxal 5'-phosphate. The Cysteine persulfide intermediate role is filled by C377. C377 lines the [2Fe-2S] cluster pocket.

The protein belongs to the class-V pyridoxal-phosphate-dependent aminotransferase family. NifS/IscS subfamily. As to quaternary structure, interacts with FH. Interacts with SUFE1. Requires pyridoxal 5'-phosphate as cofactor.

Its subcellular location is the mitochondrion. It carries out the reaction (sulfur carrier)-H + L-cysteine = (sulfur carrier)-SH + L-alanine. Threefold increase in the catalytic activity in the presence of FH (frataxin). 30-fold increase in the catalytic activity in the presence of SUFE1. Functionally, catalyzes the removal of elemental sulfur from cysteine to produce alanine. Supplies the inorganic sulfur for iron-sulfur (Fe-S) clusters. In Arabidopsis thaliana (Mouse-ear cress), this protein is Cysteine desulfurase, mitochondrial.